Reading from the N-terminus, the 272-residue chain is Imidazole glycerol phosphate synthase subunit HisF (272 aa).

Active-site residues include Asp-11 and Asp-130.

It belongs to the HisA/HisF family. In terms of assembly, heterodimer of HisH and HisF.

The protein resides in the cytoplasm. The enzyme catalyses 5-[(5-phospho-1-deoxy-D-ribulos-1-ylimino)methylamino]-1-(5-phospho-beta-D-ribosyl)imidazole-4-carboxamide + L-glutamine = D-erythro-1-(imidazol-4-yl)glycerol 3-phosphate + 5-amino-1-(5-phospho-beta-D-ribosyl)imidazole-4-carboxamide + L-glutamate + H(+). The protein operates within amino-acid biosynthesis; L-histidine biosynthesis; L-histidine from 5-phospho-alpha-D-ribose 1-diphosphate: step 5/9. In terms of biological role, IGPS catalyzes the conversion of PRFAR and glutamine to IGP, AICAR and glutamate. The HisF subunit catalyzes the cyclization activity that produces IGP and AICAR from PRFAR using the ammonia provided by the HisH subunit. This chain is Imidazole glycerol phosphate synthase subunit HisF, found in Methanococcus maripaludis (strain C5 / ATCC BAA-1333).